The following is a 556-amino-acid chain: Potassium-transporting ATPase potassium-binding subunit (556 aa).

10 helical membrane passes run 6–26 (AGIL…VPLG), 65–85 (SVLA…LLQG), 133–153 (GLSV…MAFV), 176–196 (LRIL…GGVI), 249–269 (PTTW…FSLP), 283–303 (AAIL…MMLF), 378–398 (GLYS…LMVG), 419–439 (YFLV…ALPG), 483–503 (ALGL…LALA), and 526–546 (FVGM…LPVL).

Belongs to the KdpA family. In terms of assembly, the system is composed of three essential subunits: KdpA, KdpB and KdpC.

Its subcellular location is the cell membrane. Part of the high-affinity ATP-driven potassium transport (or Kdp) system, which catalyzes the hydrolysis of ATP coupled with the electrogenic transport of potassium into the cytoplasm. This subunit binds the extracellular potassium ions and delivers the ions to the membrane domain of KdpB through an intramembrane tunnel. This chain is Potassium-transporting ATPase potassium-binding subunit, found in Mycobacterium sp. (strain KMS).